A 111-amino-acid chain; its full sequence is PCNA-associated factor (111 aa).

Position 8 is a phosphoserine (serine 8). Lysine 15 is covalently cross-linked (Glycyl lysine isopeptide (Lys-Gly) (interchain with G-Cter in ubiquitin)). The D-box signature appears at 23 to 34; sequence RKVLGSSTSATN. The interval 23-111 is disordered; it reads RKVLGSSTSA…QPDHTNDEKE (89 aa). Position 24 is an N6-acetyllysine; alternate (lysine 24). A Glycyl lysine isopeptide (Lys-Gly) (interchain with G-Cter in ubiquitin); alternate cross-link involves residue lysine 24. Residues serine 28, serine 31, and serine 72 each carry the phosphoserine modification. The segment covering 28 to 40 has biased composition (low complexity); it reads SSTSATNSTSVSS. Positions 62 to 72 match the PIP-box motif; the sequence is QKGIGEFFRLS. The span at 72–81 shows a compositional bias: basic and acidic residues; the sequence is SPKDSEKENQ. The short motif at 78-80 is the KEN box element; the sequence is KEN. An Initiation motif motif is present at residues 85–97; that stretch reads EAGSSGLGKAKRK.

Interacts (when monoubiquitinated at Lys-15 and Lys-24) with PCNA. Interacts with isoform 2/p33ING1b of ING1. Interacts with BRCA1. In terms of processing, monoubiquitinated at Lys-15 and Lys-24 during normal S phase, promoting its association with PCNA. Also diubiquitinated at these 2 sites. Following DNA damage, monoubiquitin chains at Lys-15 and Lys-24 are probably extended, leading to disrupt the interaction with PCNA. Polyubiquitinated by the APC/C complex at the mitotic exit, leading to its degradation by the proteasome. As to expression, expressed predominantly in liver, pancreas and placenta. Not detected in heart or brain. Highly expressed in a number of tumors, especially esophageal tumors, in anaplastic thyroid carcinomas, adrenocortical carcinomas, and in non-small-cell lung cancer lines.

The protein resides in the nucleus. It is found in the cytoplasm. The protein localises to the perinuclear region. In terms of biological role, PCNA-binding protein that acts as a regulator of DNA repair during DNA replication. Following DNA damage, the interaction with PCNA is disrupted, facilitating the interaction between monoubiquitinated PCNA and the translesion DNA synthesis DNA polymerase eta (POLH) at stalled replisomes, facilitating the bypass of replication-fork-blocking lesions. Also acts as a regulator of centrosome number. This Homo sapiens (Human) protein is PCNA-associated factor.